Here is a 202-residue protein sequence, read N- to C-terminus: Small ribosomal subunit protein uS4 (202 aa).

The disordered stretch occupies residues 22-43 (TRKNARRAYPPGQHGQNRRKRS). The region spanning 90–152 (MRLDNTVFRL…DKSRKLVQAN (63 aa)) is the S4 RNA-binding domain.

It belongs to the universal ribosomal protein uS4 family. Part of the 30S ribosomal subunit. Contacts protein S5. The interaction surface between S4 and S5 is involved in control of translational fidelity.

Its function is as follows. One of the primary rRNA binding proteins, it binds directly to 16S rRNA where it nucleates assembly of the body of the 30S subunit. With S5 and S12 plays an important role in translational accuracy. The protein is Small ribosomal subunit protein uS4 of Gloeothece citriformis (strain PCC 7424) (Cyanothece sp. (strain PCC 7424)).